Reading from the N-terminus, the 72-residue chain is MSCSCGSSCGCGSNCTCGKMYPDLEEKSSSAQATVVLGVAPEKAHFEAAAESGETAHGCGCGSSCKCNPCNC.

Belongs to the metallothionein superfamily. Type 15 family. Expressed in leaves of mature plants.

Metallothioneins have a high content of cysteine residues that bind various heavy metals. Functions as a metal chelator of nickel (Ni), cadmium (Cd), zinc (Zn) and copper (Cu). Possesses higher affinity for Ni and Cd ions compared to Zn and Cu ions. This is Metallothionein-like protein 1B (MT1B) from Oryza sativa subsp. japonica (Rice).